The following is a 386-amino-acid chain: L-lactate dehydrogenase (386 aa).

The FMN hydroxy acid dehydrogenase domain maps to 1–380 (MIISAASDYR…SGDALSRVTR (380 aa)). Substrate is bound at residue Tyr24. Positions 106 and 127 each coordinate FMN. A substrate-binding site is contributed by Tyr129. Thr155 is an FMN binding site. Arg164 serves as a coordination point for substrate. Lys251 contacts FMN. His275 (proton acceptor) is an active-site residue. A substrate-binding site is contributed by Arg278. Position 306 to 330 (306 to 330 (DSGIRSGLDVVRMLALGADAVLLGR)) interacts with FMN.

Belongs to the FMN-dependent alpha-hydroxy acid dehydrogenase family. FMN is required as a cofactor.

The protein resides in the cell inner membrane. It catalyses the reaction (S)-lactate + A = pyruvate + AH2. Catalyzes the conversion of L-lactate to pyruvate. Is coupled to the respiratory chain. This Xanthomonas campestris pv. campestris (strain 8004) protein is L-lactate dehydrogenase.